The primary structure comprises 119 residues: Putative F-box protein At2g39415 (119 aa).

The region spanning 37–92 is the F-box domain; it reads IDSISSLPDVILQQILSSLPTNLAIRTSVLSTRWRHVWSDTPYIYFDGPGTLYRGL.

In Arabidopsis thaliana (Mouse-ear cress), this protein is Putative F-box protein At2g39415.